The following is a 362-amino-acid chain: Phenylalanine--tRNA ligase alpha subunit (362 aa).

Residue glutamate 263 coordinates Mg(2+).

Belongs to the class-II aminoacyl-tRNA synthetase family. Phe-tRNA synthetase alpha subunit type 1 subfamily. As to quaternary structure, tetramer of two alpha and two beta subunits. Mg(2+) serves as cofactor.

The protein localises to the cytoplasm. The enzyme catalyses tRNA(Phe) + L-phenylalanine + ATP = L-phenylalanyl-tRNA(Phe) + AMP + diphosphate + H(+). The chain is Phenylalanine--tRNA ligase alpha subunit from Caulobacter sp. (strain K31).